The following is a 166-amino-acid chain: MPDELRAEKSFQSKPYDSLKNKSEFDRVYQKGFKKHNLFFSLFVLDLSKEPPKGKEGFKDPLSCRLKDKKTLYLLGLSVSKKVGNAVKRNLIKRRLRSLTLKHAALCQGLALVFVPRSDCYHLDFWALEKHFLEMLTSIKNYIEQSLKRLEKRNNSYLCETIKRLF.

Belongs to the RnpA family. In terms of assembly, consists of a catalytic RNA component (M1 or rnpB) and a protein subunit.

The enzyme catalyses Endonucleolytic cleavage of RNA, removing 5'-extranucleotides from tRNA precursor.. Its function is as follows. RNaseP catalyzes the removal of the 5'-leader sequence from pre-tRNA to produce the mature 5'-terminus. It can also cleave other RNA substrates such as 4.5S RNA. The protein component plays an auxiliary but essential role in vivo by binding to the 5'-leader sequence and broadening the substrate specificity of the ribozyme. This chain is Ribonuclease P protein component, found in Helicobacter pylori (strain HPAG1).